Reading from the N-terminus, the 361-residue chain is Phenylalanine--tRNA ligase alpha subunit (361 aa).

Glutamate 260 serves as a coordination point for Mg(2+).

It belongs to the class-II aminoacyl-tRNA synthetase family. Phe-tRNA synthetase alpha subunit type 1 subfamily. In terms of assembly, tetramer of two alpha and two beta subunits. The cofactor is Mg(2+).

It is found in the cytoplasm. It catalyses the reaction tRNA(Phe) + L-phenylalanine + ATP = L-phenylalanyl-tRNA(Phe) + AMP + diphosphate + H(+). In Bartonella quintana (strain Toulouse) (Rochalimaea quintana), this protein is Phenylalanine--tRNA ligase alpha subunit.